A 248-amino-acid polypeptide reads, in one-letter code: MSEKIAILSAYSFVNIEEPESLIPKLLFVGKRKYVKGTILLSKEGFNGSFSGSYESVNLVLEELKKLTNTKDVNVKINYSEIHPFQKLKVRLKKEIVAMNVDNLNVNLFKGEYIETKDWDEFITKQDVIVVDTRNDYEVEVGTFKAAINPYTETFKQFPAWAEQNAELLKGKKIAMFCTGGIRCEKSTSLLKSMGHEEVYHLKGGILQYLEDTQNKNNLWQGECFVFDDRRAVADDLAPAEGYWLERK.

Residues 124–218 form the Rhodanese domain; it reads TKQDVIVVDT…YLEDTQNKNN (95 aa). C178 acts as the Cysteine persulfide intermediate in catalysis.

It belongs to the TrhO family.

The enzyme catalyses uridine(34) in tRNA + AH2 + O2 = 5-hydroxyuridine(34) in tRNA + A + H2O. In terms of biological role, catalyzes oxygen-dependent 5-hydroxyuridine (ho5U) modification at position 34 in tRNAs. This Rickettsia bellii (strain OSU 85-389) protein is tRNA uridine(34) hydroxylase.